We begin with the raw amino-acid sequence, 572 residues long: MLKNPATKYRSFKPIDLTDRQWPSRTITRPPIWMSTDLRDGNQSLFEPMDAQRKMRMFKTLVQIGFKEIEVAFPSASQTDFNFVRELIEGGHIPDDVTIEVLTQARDDLIERTFESLRGVPRAIVHLYNATAPEFRKIVFNLEKSGVKELAQNAARTMKRIAATMPETQFTFQYSPEVFSGTEIEFAKEVCDAVFDIWEPTPEHKAIVNLPATVEMSTPNIYADQIEWMHRNLKRRDSLVISVHPHNDRGTAVAAAELAVMAGADRIEGCLFGNGERTGNVDLVTLALNLYTQGVDPGLDFSNINEVARTAEECTQLPIHPRHPYVGDLVFTAFSGSHQDAIKKGFAVQKPDAMWEVPYMPIDPADLGRTYDSVIRVNSQSGKGGIAYLLEQGYGVVLPRRLQVDFSSAVQRFTDDSGQEVTSAQIWELFQQEYVQNATPVHYVGHSLSERDGREHIKLTVDINGTRRVLNGAGNGPLDALMHAIGVPVRIQHYEERALTQGADARAVAVAEMAGADVTGSAFGVGIDANLVTASIRAVISGVNRAYARVNAQAKERFFEAAMNDATESVGV.

A Pyruvate carboxyltransferase domain is found at 31–305; sequence PIWMSTDLRD…DPGLDFSNIN (275 aa). Residues Asp-40, His-244, His-246, and Asn-280 each coordinate Mg(2+). The regulatory domain stretch occupies residues 437–572; it reads NATPVHYVGH…MNDATESVGV (136 aa).

It belongs to the alpha-IPM synthase/homocitrate synthase family. LeuA type 2 subfamily. As to quaternary structure, homodimer. Mg(2+) serves as cofactor.

It localises to the cytoplasm. It catalyses the reaction 3-methyl-2-oxobutanoate + acetyl-CoA + H2O = (2S)-2-isopropylmalate + CoA + H(+). It participates in amino-acid biosynthesis; L-leucine biosynthesis; L-leucine from 3-methyl-2-oxobutanoate: step 1/4. In terms of biological role, catalyzes the condensation of the acetyl group of acetyl-CoA with 3-methyl-2-oxobutanoate (2-ketoisovalerate) to form 3-carboxy-3-hydroxy-4-methylpentanoate (2-isopropylmalate). The protein is 2-isopropylmalate synthase of Paraburkholderia xenovorans (strain LB400).